We begin with the raw amino-acid sequence, 553 residues long: Threonylcarbamoyladenosine tRNA methylthiotransferase (553 aa).

The tract at residues 21 to 61 (SAEDVKPQERYQNKKSVTVRAKKRVQIKPETDAEEKPTPRP) is disordered. Basic and acidic residues-rich tracts occupy residues 23 to 32 (EDVKPQERYQ) and 47 to 58 (IKPETDAEEKPT). The MTTase N-terminal domain maps to 72–179 (QKVFVKTWGC…VVEVVEETLK (108 aa)). Residues Cys81, Cys116, Cys145, Cys221, Cys225, and Cys228 each contribute to the [4Fe-4S] cluster site. The Radical SAM core domain maps to 207-438 (RKNPLIEIIS…DLFYSYEPYA (232 aa)). One can recognise a TRAM domain in the interval 438–500 (AQRVGEMYTV…KFSMVGEILD (63 aa)). A helical transmembrane segment spans residues 533 to 553 (VGIALVVGSLAFLLQLLIRFL).

It belongs to the methylthiotransferase family. CDKAL1 subfamily. [4Fe-4S] cluster is required as a cofactor.

The protein resides in the membrane. It carries out the reaction N(6)-L-threonylcarbamoyladenosine(37) in tRNA + (sulfur carrier)-SH + AH2 + 2 S-adenosyl-L-methionine = 2-methylsulfanyl-N(6)-L-threonylcarbamoyladenosine(37) in tRNA + (sulfur carrier)-H + 5'-deoxyadenosine + L-methionine + A + S-adenosyl-L-homocysteine + 2 H(+). In terms of biological role, catalyzes the methylthiolation of N6-threonylcarbamoyladenosine (t(6)A), leading to the formation of 2-methylthio-N6-threonylcarbamoyladenosine (ms(2)t(6)A) at position 37 in tRNAs that read codons beginning with adenine. This is Threonylcarbamoyladenosine tRNA methylthiotransferase from Drosophila pseudoobscura pseudoobscura (Fruit fly).